The chain runs to 117 residues: Large ribosomal subunit protein bL20 (117 aa).

It belongs to the bacterial ribosomal protein bL20 family.

In terms of biological role, binds directly to 23S ribosomal RNA and is necessary for the in vitro assembly process of the 50S ribosomal subunit. It is not involved in the protein synthesizing functions of that subunit. This chain is Large ribosomal subunit protein bL20, found in Rickettsia africae (strain ESF-5).